A 165-amino-acid chain; its full sequence is Phosphopantetheine adenylyltransferase (165 aa).

Serine 8 contacts substrate. ATP-binding positions include serine 8–phenylalanine 9 and histidine 16. 3 residues coordinate substrate: lysine 40, threonine 72, and arginine 86. ATP-binding positions include glycine 87 to arginine 89, glutamate 97, and tyrosine 122 to serine 128.

Belongs to the bacterial CoaD family. Homohexamer. Mg(2+) is required as a cofactor.

The protein localises to the cytoplasm. It catalyses the reaction (R)-4'-phosphopantetheine + ATP + H(+) = 3'-dephospho-CoA + diphosphate. The protein operates within cofactor biosynthesis; coenzyme A biosynthesis; CoA from (R)-pantothenate: step 4/5. Functionally, reversibly transfers an adenylyl group from ATP to 4'-phosphopantetheine, yielding dephospho-CoA (dPCoA) and pyrophosphate. This Synechococcus sp. (strain WH7803) protein is Phosphopantetheine adenylyltransferase.